Here is a 238-residue protein sequence, read N- to C-terminus: Formate dehydrogenase, cytochrome b556 subunit (238 aa).

Residues histidine 23 and histidine 62 each coordinate heme b. The next 4 membrane-spanning stretches (helical) occupy residues 23–43 (HWMLVICFFMTMFTGVAFFFP), 60–80 (AIHPFTGILMFFAFIYLALLY), 120–140 (MLFWTLNLAMVTLLVTGIIMW), and 155–175 (IAILLHSASAFMLFTGILVHI). Heme b contacts are provided by histidine 160 and histidine 174.

The protein belongs to the formate dehydrogenase gamma subunit family. As to quaternary structure, formate dehydrogenase is a membrane-bound complex, formed by subunits alpha, beta and gamma. Requires heme as cofactor.

It is found in the cell membrane. Its function is as follows. Allows to use formate as major electron donor during anaerobic respiration. Subunit gamma is probably the cytochrome b556(FDO) component of the formate dehydrogenase. This chain is Formate dehydrogenase, cytochrome b556 subunit (fdxI), found in Haemophilus influenzae (strain ATCC 51907 / DSM 11121 / KW20 / Rd).